Reading from the N-terminus, the 212-residue chain is Proteasome subunit beta (212 aa).

Residues 1-11 (MSQEHQDVKTG) constitute a propeptide, removed in mature form; by autocatalysis. Thr12 serves as the catalytic Nucleophile.

The protein belongs to the peptidase T1B family. In terms of assembly, the 20S proteasome core is composed of 14 alpha and 14 beta subunits that assemble into four stacked heptameric rings, resulting in a barrel-shaped structure. The two inner rings, each composed of seven catalytic beta subunits, are sandwiched by two outer rings, each composed of seven alpha subunits. The catalytic chamber with the active sites is on the inside of the barrel. Has a gated structure, the ends of the cylinder being occluded by the N-termini of the alpha-subunits. Is capped at one or both ends by the proteasome regulatory ATPase, PAN.

It is found in the cytoplasm. It catalyses the reaction Cleavage of peptide bonds with very broad specificity.. The formation of the proteasomal ATPase PAN-20S proteasome complex, via the docking of the C-termini of PAN into the intersubunit pockets in the alpha-rings, triggers opening of the gate for substrate entry. Interconversion between the open-gate and close-gate conformations leads to a dynamic regulation of the 20S proteasome proteolysis activity. Component of the proteasome core, a large protease complex with broad specificity involved in protein degradation. The polypeptide is Proteasome subunit beta (Methanocorpusculum labreanum (strain ATCC 43576 / DSM 4855 / Z)).